We begin with the raw amino-acid sequence, 534 residues long: Nuclear polyadenylated RNA-binding protein 4 (534 aa).

The interval 1–154 (MSSDEEDFND…TKEERSKADL (154 aa)) is disordered. Phosphoserine is present on residues serine 2 and serine 3. Residues 13–30 (GDDKPTTTEEVKKEEEQN) are compositionally biased toward basic and acidic residues. The segment covering 37–78 (SQLDQLAALQALSSSLNKLNNPNSNNSSSNNSNQDTSSSKQD) has biased composition (low complexity). 2 positions are modified to phosphoserine: serine 51 and serine 87. Basic and acidic residues predominate over residues 81 to 98 (ANDKEGSNEDTKNEKKQE). 2 stretches are compositionally biased toward low complexity: residues 99–112 (SATS…ASSA) and 121–144 (QLQQ…QVTQ). A compositionally biased stretch (basic and acidic residues) spans 145-154 (TKEERSKADL). 2 consecutive RRM domains span residues 159 to 241 (CKMF…EQDK) and 243 to 320 (GKIF…RAEP). Serine 206 carries the phosphoserine modification. Disordered stretches follow at residues 316 to 354 (KRAE…DFNQ) and 415 to 534 (MPPN…PYNR). Low complexity predominate over residues 336–354 (GNNMNRRGGNFGNQGDFNQ). Over residues 420 to 459 (MTLNQPQQDSNATQGSPAPSDSDNNKSNDVQTIGNTSNTD) the composition is skewed to polar residues. Threonine 458 is subject to Phosphothreonine. A phosphoserine mark is found at serine 460 and serine 462. A compositionally biased stretch (low complexity) spans 460–475 (SGSPPLNLPNGPKGPS). Positions 478–505 (NDDHNSGYGYNRDRGDRDRNDRDRDYNH) are enriched in basic and acidic residues. Position 519 is an omega-N-methylarginine (arginine 519). The span at 523 to 534 (NRRNNGYHPYNR) shows a compositional bias: low complexity.

In terms of assembly, interacts with NAM7. Methylated by HMT1. The methylation is required for nuclear export.

Its subcellular location is the cytoplasm. It localises to the nucleus. It is found in the stress granule. In terms of biological role, RNA-binding protein, which is involved in the polyadenylation-dependent pre-mRNA 3'-end formation and cooperates with the cleavage factor CFIA complex and the cleavage and polyadenylation factor (CPF) complex. May be involved in regulation of poly(A) site selection. Is involved in nonsense-mediated mRNA decay. Seems to bind to an RNA downstream sequence element (DSE) located 3' of a nonsense codon and may mark the transcript for decay. This is Nuclear polyadenylated RNA-binding protein 4 from Saccharomyces cerevisiae (strain ATCC 204508 / S288c) (Baker's yeast).